The chain runs to 318 residues: NADH-ubiquinone oxidoreductase chain 1 (318 aa).

The next 8 membrane-spanning stretches (helical) occupy residues 2-22 (FMIN…FLTL), 69-89 (LLFT…WLPL), 100-120 (LGVL…LWSG), 146-166 (LAII…TNLI), 171-191 (HMWL…STLA), 231-251 (IMMM…TPLV), 253-273 (GIYT…FLWI), and 285-305 (LMHL…MWHV).

This sequence belongs to the complex I subunit 1 family. In terms of assembly, core subunit of respiratory chain NADH dehydrogenase (Complex I) which is composed of 45 different subunits.

The protein localises to the mitochondrion inner membrane. It carries out the reaction a ubiquinone + NADH + 5 H(+)(in) = a ubiquinol + NAD(+) + 4 H(+)(out). Its function is as follows. Core subunit of the mitochondrial membrane respiratory chain NADH dehydrogenase (Complex I) which catalyzes electron transfer from NADH through the respiratory chain, using ubiquinone as an electron acceptor. Essential for the catalytic activity and assembly of complex I. In Myrmecophaga tridactyla (Giant anteater), this protein is NADH-ubiquinone oxidoreductase chain 1 (MT-ND1).